We begin with the raw amino-acid sequence, 288 residues long: Phosphatidylserine decarboxylase proenzyme (288 aa).

Active-site charge relay system; for autoendoproteolytic cleavage activity residues include aspartate 88, histidine 145, and serine 248. The active-site Schiff-base intermediate with substrate; via pyruvic acid; for decarboxylase activity is the serine 248. Pyruvic acid (Ser); by autocatalysis is present on serine 248.

The protein belongs to the phosphatidylserine decarboxylase family. PSD-B subfamily. Prokaryotic type I sub-subfamily. In terms of assembly, heterodimer of a large membrane-associated beta subunit and a small pyruvoyl-containing alpha subunit. Pyruvate serves as cofactor. Is synthesized initially as an inactive proenzyme. Formation of the active enzyme involves a self-maturation process in which the active site pyruvoyl group is generated from an internal serine residue via an autocatalytic post-translational modification. Two non-identical subunits are generated from the proenzyme in this reaction, and the pyruvate is formed at the N-terminus of the alpha chain, which is derived from the carboxyl end of the proenzyme. The autoendoproteolytic cleavage occurs by a canonical serine protease mechanism, in which the side chain hydroxyl group of the serine supplies its oxygen atom to form the C-terminus of the beta chain, while the remainder of the serine residue undergoes an oxidative deamination to produce ammonia and the pyruvoyl prosthetic group on the alpha chain. During this reaction, the Ser that is part of the protease active site of the proenzyme becomes the pyruvoyl prosthetic group, which constitutes an essential element of the active site of the mature decarboxylase.

The protein resides in the cell membrane. It catalyses the reaction a 1,2-diacyl-sn-glycero-3-phospho-L-serine + H(+) = a 1,2-diacyl-sn-glycero-3-phosphoethanolamine + CO2. It participates in phospholipid metabolism; phosphatidylethanolamine biosynthesis; phosphatidylethanolamine from CDP-diacylglycerol: step 2/2. In terms of biological role, catalyzes the formation of phosphatidylethanolamine (PtdEtn) from phosphatidylserine (PtdSer). The chain is Phosphatidylserine decarboxylase proenzyme from Azoarcus sp. (strain BH72).